The sequence spans 330 residues: Ribosomal RNA small subunit methyltransferase A (330 aa).

S-adenosyl-L-methionine-binding residues include His-29, Leu-31, Gly-56, Glu-77, and Asp-98. The disordered stretch occupies residues 115 to 158 (PVRSAGLPQAETAPKGLEPAGSSSQQGPRDWLRQTAGAAAPSRG). Position 177 (Asn-177) interacts with S-adenosyl-L-methionine.

It belongs to the class I-like SAM-binding methyltransferase superfamily. rRNA adenine N(6)-methyltransferase family. RsmA subfamily.

It localises to the cytoplasm. It carries out the reaction adenosine(1518)/adenosine(1519) in 16S rRNA + 4 S-adenosyl-L-methionine = N(6)-dimethyladenosine(1518)/N(6)-dimethyladenosine(1519) in 16S rRNA + 4 S-adenosyl-L-homocysteine + 4 H(+). Functionally, specifically dimethylates two adjacent adenosines (A1518 and A1519) in the loop of a conserved hairpin near the 3'-end of 16S rRNA in the 30S particle. May play a critical role in biogenesis of 30S subunits. The sequence is that of Ribosomal RNA small subunit methyltransferase A from Polaromonas sp. (strain JS666 / ATCC BAA-500).